Consider the following 408-residue polypeptide: MKQEIIDRFTRYAKVDTQSTEASNTVPTTEGQLELGRILVEELKALGLTEVTMDDNGYVMATLESNTNKEVPTIGFLAHLDTATEFTGKNVNPQVHEYNGGDIELGHGYVLSPKQFPELAGYEGHTLITTDGTTLLGADDKAGIAEIMTAMDYLIKHPEIEHGKIRVAFTPDEEIGRGPAHFDVDAFGAAFAYTLDGGPLGQFQYESFNAAAAKVSFYGVSTHPGTAKNKMVNAIKRAIEFHSQLPANEAPEFTEGYEGFYHLLSMEGNADFAELHYIIRDFDRQQFANRKAKMEAIAWEMQEKHGKGKVSIELRDQYYNMREKIEPQKEIVEVALEAMEKLGIDPKVGPIRGGTDGSQLSYKGLPTPNIFTGGENYHGRYEYVSVDNMEKAVHVIVNIANLVAQRAK.

His79 serves as a coordination point for Zn(2+). Residue Asp81 is part of the active site. Zn(2+) is bound at residue Asp139. Glu173 acts as the Proton acceptor in catalysis. The Zn(2+) site is built by Glu174, Asp196, and His378.

The protein belongs to the peptidase M20B family. Zn(2+) serves as cofactor.

It localises to the cytoplasm. It carries out the reaction Release of the N-terminal residue from a tripeptide.. Its function is as follows. Cleaves the N-terminal amino acid of tripeptides. This is Peptidase T from Shouchella clausii (strain KSM-K16) (Alkalihalobacillus clausii).